The following is a 438-amino-acid chain: DNA polymerase IV 1 (438 aa).

A UmuC domain is found at 46–226 (LAHIDCDAFY…KPVTMIWGVG (181 aa)). 2 residues coordinate Mg(2+): Asp50 and Asp143. The active site involves Glu144.

It belongs to the DNA polymerase type-Y family. In terms of assembly, monomer. The cofactor is Mg(2+).

The protein resides in the cytoplasm. The catalysed reaction is DNA(n) + a 2'-deoxyribonucleoside 5'-triphosphate = DNA(n+1) + diphosphate. Its function is as follows. Poorly processive, error-prone DNA polymerase involved in untargeted mutagenesis. Copies undamaged DNA at stalled replication forks, which arise in vivo from mismatched or misaligned primer ends. These misaligned primers can be extended by PolIV. Exhibits no 3'-5' exonuclease (proofreading) activity. May be involved in translesional synthesis, in conjunction with the beta clamp from PolIII. The chain is DNA polymerase IV 1 (dinB1) from Mesorhizobium japonicum (strain LMG 29417 / CECT 9101 / MAFF 303099) (Mesorhizobium loti (strain MAFF 303099)).